We begin with the raw amino-acid sequence, 376 residues long: Queuine tRNA-ribosyltransferase (376 aa).

Residue Asp89 is the Proton acceptor of the active site. Residues 89–93, Asp143, Gln194, and Gly221 contribute to the substrate site; that span reads DSGGF. The segment at 252–258 is RNA binding; that stretch reads GVGTPSN. Residue Asp271 is the Nucleophile of the active site. Residues 276 to 280 are RNA binding; important for wobble base 34 recognition; it reads ARNGR. Cys309, Cys311, Cys314, and His340 together coordinate Zn(2+).

The protein belongs to the queuine tRNA-ribosyltransferase family. Homodimer. Within each dimer, one monomer is responsible for RNA recognition and catalysis, while the other monomer binds to the replacement base PreQ1. It depends on Zn(2+) as a cofactor.

The catalysed reaction is 7-aminomethyl-7-carbaguanine + guanosine(34) in tRNA = 7-aminomethyl-7-carbaguanosine(34) in tRNA + guanine. Its pathway is tRNA modification; tRNA-queuosine biosynthesis. Catalyzes the base-exchange of a guanine (G) residue with the queuine precursor 7-aminomethyl-7-deazaguanine (PreQ1) at position 34 (anticodon wobble position) in tRNAs with GU(N) anticodons (tRNA-Asp, -Asn, -His and -Tyr). Catalysis occurs through a double-displacement mechanism. The nucleophile active site attacks the C1' of nucleotide 34 to detach the guanine base from the RNA, forming a covalent enzyme-RNA intermediate. The proton acceptor active site deprotonates the incoming PreQ1, allowing a nucleophilic attack on the C1' of the ribose to form the product. After dissociation, two additional enzymatic reactions on the tRNA convert PreQ1 to queuine (Q), resulting in the hypermodified nucleoside queuosine (7-(((4,5-cis-dihydroxy-2-cyclopenten-1-yl)amino)methyl)-7-deazaguanosine). This chain is Queuine tRNA-ribosyltransferase, found in Clostridium acetobutylicum (strain ATCC 824 / DSM 792 / JCM 1419 / IAM 19013 / LMG 5710 / NBRC 13948 / NRRL B-527 / VKM B-1787 / 2291 / W).